The primary structure comprises 89 residues: Small ribosomal subunit protein uS15 (89 aa).

Belongs to the universal ribosomal protein uS15 family. As to quaternary structure, part of the 30S ribosomal subunit. Forms a bridge to the 50S subunit in the 70S ribosome, contacting the 23S rRNA.

One of the primary rRNA binding proteins, it binds directly to 16S rRNA where it helps nucleate assembly of the platform of the 30S subunit by binding and bridging several RNA helices of the 16S rRNA. Its function is as follows. Forms an intersubunit bridge (bridge B4) with the 23S rRNA of the 50S subunit in the ribosome. The protein is Small ribosomal subunit protein uS15 of Rippkaea orientalis (strain PCC 8801 / RF-1) (Cyanothece sp. (strain PCC 8801)).